The chain runs to 484 residues: MEKSKNIWSLILTEIKKELSEEEFYVWFENLCFLESIGDNIQISTPNLFHKNQIEKRFTKKIKEILTKNGYNNVTIVFTNQPPKTYSSKQESEKTTFKETLQNFDKLKGNTLSKEPIQSIKDRIKMYIKEEEPTNFKNPFLKKRYTFENFIIGPNNRLAYNASLSISKNPGKKYNPCLIYGGVGLGKTHLLQSIGNKTEELHNNLKILYVTAENFLNEFVESIKTHETKKFKKKYRYLDMLLIDDIHDLQKKEGIQEELFHTFNALYEDNKQLVFTCDRSPSELTNFTDRLKSRFTRGLNVDISKPNFELRVAIIEKKAEEDGIKVPKDILNLVAQKVTTNVRDLEAAVTKLKAYIDLDNIEIDIDIVEKIIKEIIIYEKETTNESSNKINIENIKKILLRELKIAHKDIEGHSKKPEITKARHIYAYLLRNFTELSTVEIGKIIGGKTHSTVLYSINKIDRDRNNDKEINNLITELMNKIKKN.

Residues 1-74 (MEKSKNIWSL…ILTKNGYNNV (74 aa)) form a domain I, interacts with DnaA modulators region. Residues 74 to 139 (VTIVFTNQPP…EEEPTNFKNP (66 aa)) form a domain II region. The segment at 140–356 (FLKKRYTFEN…AAVTKLKAYI (217 aa)) is domain III, AAA+ region. 4 residues coordinate ATP: Gly-184, Gly-186, Lys-187, and Thr-188. The tract at residues 357–484 (DLDNIEIDID…TELMNKIKKN (128 aa)) is domain IV, binds dsDNA.

It belongs to the DnaA family. Oligomerizes as a right-handed, spiral filament on DNA at oriC.

The protein localises to the cytoplasm. In terms of biological role, plays an essential role in the initiation and regulation of chromosomal replication. ATP-DnaA binds to the origin of replication (oriC) to initiate formation of the DNA replication initiation complex once per cell cycle. Binds the DnaA box (a 9 base pair repeat at the origin) and separates the double-stranded (ds)DNA. Forms a right-handed helical filament on oriC DNA; dsDNA binds to the exterior of the filament while single-stranded (ss)DNA is stabiized in the filament's interior. The ATP-DnaA-oriC complex binds and stabilizes one strand of the AT-rich DNA unwinding element (DUE), permitting loading of DNA polymerase. After initiation quickly degrades to an ADP-DnaA complex that is not apt for DNA replication. Binds acidic phospholipids. The polypeptide is Chromosomal replication initiator protein DnaA (Borrelia garinii subsp. bavariensis (strain ATCC BAA-2496 / DSM 23469 / PBi) (Borreliella bavariensis)).